The primary structure comprises 670 residues: PML-RARA-regulated adapter molecule 1 (670 aa).

The interval 1–561 is disordered; it reads MAHHLPAAME…PQQLPPMDPK (561 aa). The span at 31–43 shows a compositional bias: basic and acidic residues; that stretch reads DLPKKPPKPEFGK. Repeat copies occupy residues 70 to 81, 82 to 93, 94 to 105, and 106 to 117. The tract at residues 70-165 is 4 X 12 AA repeats of K-P-P-[PQ]-P-[EQ]-[VAF]-T-D-L-P-K; it reads KPPPPEVTDL…SLPEPGAPAR (96 aa). Positions 114-129 are enriched in basic and acidic residues; the sequence is DLPKKPSKLELSDLSK. At Ser-340 the chain carries Phosphoserine. Residues 386-398 are compositionally biased toward low complexity; that stretch reads SSASESSLPAAVA. Positions 454–463 are enriched in pro residues; it reads PAKPPLPPGP. Residues 504–514 show a composition bias toward acidic residues; it reads EIYELYDDVEP. Positions 515–528 are enriched in basic and acidic residues; sequence RDDSSPSPKGRDEA. Residues 571–649 form the SH3 domain; sequence KAEREFRKKF…PRTALLPLET (79 aa).

As to quaternary structure, interacts with SKAP2, LCP2 and DBNL. May interact with LYN. Interacts with NEK6. In terms of processing, may be phosphorylated on tyrosines. Expressed in peripheral blood leukocytes and bone marrow. Expressed in monocytes, and to a lesser extent in granulocytes and lymphocytes. Not expressed in non hematopoietic tissues except in lung.

In terms of biological role, may be involved in myeloid differentiation. May be involved in integrin signaling in neutrophils. Binds to PtdIns(4)P. This chain is PML-RARA-regulated adapter molecule 1 (PRAM1), found in Homo sapiens (Human).